The primary structure comprises 183 residues: MPVEKTLLILKPDAVARGLVGEIISRFEKAGLKIVALKMVKASPEEIERFYPSSEEWLRSAGQKLLKAYQELGIDPRAKIGTDDPVEVGRIIKRSLVKYMTSGPIVVMVLKGNRAVEIVRKLVGPTSPHSAPPGTIRGDYSIDSPDLAAEEGRVVFNLVHASDSPSEAEREIRFWFREEEVLE.

Lysine 11 is a binding site for ATP. The interval 56–88 is insert; sequence EWLRSAGQKLLKAYQELGIDPRAKIGTDDPVEV. ATP contacts are provided by arginine 120, threonine 126, arginine 137, and asparagine 157. Catalysis depends on histidine 160, which acts as the Pros-phosphohistidine intermediate.

Belongs to the NDK family. Requires Mg(2+) as cofactor.

It is found in the cytoplasm. It carries out the reaction a 2'-deoxyribonucleoside 5'-diphosphate + ATP = a 2'-deoxyribonucleoside 5'-triphosphate + ADP. It catalyses the reaction a ribonucleoside 5'-diphosphate + ATP = a ribonucleoside 5'-triphosphate + ADP. Functionally, major role in the synthesis of nucleoside triphosphates other than ATP. The ATP gamma phosphate is transferred to the NDP beta phosphate via a ping-pong mechanism, using a phosphorylated active-site intermediate. This chain is Nucleoside diphosphate kinase (ndk), found in Pyrobaculum aerophilum (strain ATCC 51768 / DSM 7523 / JCM 9630 / CIP 104966 / NBRC 100827 / IM2).